The primary structure comprises 351 residues: Sulfate/thiosulfate import ATP-binding protein CysA (351 aa).

The ABC transporter domain occupies 3–237; sequence ITVRNLHKRF…PRSAFVYEFL (235 aa). 35–42 contributes to the ATP binding site; it reads GPSGCGKT.

It belongs to the ABC transporter superfamily. Sulfate/tungstate importer (TC 3.A.1.6) family. The complex is composed of two ATP-binding proteins (CysA), two transmembrane proteins (CysT and CysW) and a solute-binding protein (CysP).

It is found in the cell inner membrane. It carries out the reaction sulfate(out) + ATP + H2O = sulfate(in) + ADP + phosphate + H(+). The enzyme catalyses thiosulfate(out) + ATP + H2O = thiosulfate(in) + ADP + phosphate + H(+). Its function is as follows. Part of the ABC transporter complex CysAWTP involved in sulfate/thiosulfate import. Responsible for energy coupling to the transport system. The sequence is that of Sulfate/thiosulfate import ATP-binding protein CysA from Burkholderia pseudomallei (strain K96243).